We begin with the raw amino-acid sequence, 354 residues long: Protein-glutamate methylesterase/protein-glutamine glutaminase 2 (354 aa).

The region spanning Arg-5–Glu-122 is the Response regulatory domain. Asp-56 is modified (4-aspartylphosphate). The CheB-type methylesterase domain occupies Pro-159–Arg-354. Residues Ser-172, His-199, and Asp-298 contribute to the active site.

This sequence belongs to the CheB family. Phosphorylated by CheA. Phosphorylation of the N-terminal regulatory domain activates the methylesterase activity.

It is found in the cytoplasm. It carries out the reaction [protein]-L-glutamate 5-O-methyl ester + H2O = L-glutamyl-[protein] + methanol + H(+). It catalyses the reaction L-glutaminyl-[protein] + H2O = L-glutamyl-[protein] + NH4(+). Its function is as follows. Involved in chemotaxis. Part of a chemotaxis signal transduction system that modulates chemotaxis in response to various stimuli. Catalyzes the demethylation of specific methylglutamate residues introduced into the chemoreceptors (methyl-accepting chemotaxis proteins or MCP) by CheR. Also mediates the irreversible deamidation of specific glutamine residues to glutamic acid. This chain is Protein-glutamate methylesterase/protein-glutamine glutaminase 2, found in Carboxydothermus hydrogenoformans (strain ATCC BAA-161 / DSM 6008 / Z-2901).